A 428-amino-acid chain; its full sequence is Serine--tRNA ligase (428 aa).

231–233 (TAE) is an L-serine binding site. Residue 262-264 (RSE) participates in ATP binding. Glutamate 285 contributes to the L-serine binding site. 349 to 352 (EISS) contacts ATP. Serine 385 serves as a coordination point for L-serine.

Belongs to the class-II aminoacyl-tRNA synthetase family. Type-1 seryl-tRNA synthetase subfamily. Homodimer. The tRNA molecule binds across the dimer.

Its subcellular location is the cytoplasm. The catalysed reaction is tRNA(Ser) + L-serine + ATP = L-seryl-tRNA(Ser) + AMP + diphosphate + H(+). It catalyses the reaction tRNA(Sec) + L-serine + ATP = L-seryl-tRNA(Sec) + AMP + diphosphate + H(+). It functions in the pathway aminoacyl-tRNA biosynthesis; selenocysteinyl-tRNA(Sec) biosynthesis; L-seryl-tRNA(Sec) from L-serine and tRNA(Sec): step 1/1. Its function is as follows. Catalyzes the attachment of serine to tRNA(Ser). Is also able to aminoacylate tRNA(Sec) with serine, to form the misacylated tRNA L-seryl-tRNA(Sec), which will be further converted into selenocysteinyl-tRNA(Sec). The sequence is that of Serine--tRNA ligase from Staphylococcus carnosus (strain TM300).